Reading from the N-terminus, the 152-residue chain is D-aminoacyl-tRNA deacylase (152 aa).

Residues 137 to 138 carry the Gly-cisPro motif, important for rejection of L-amino acids motif; that stretch reads GP.

Belongs to the DTD family. In terms of assembly, homodimer.

Its subcellular location is the cytoplasm. It catalyses the reaction glycyl-tRNA(Ala) + H2O = tRNA(Ala) + glycine + H(+). The enzyme catalyses a D-aminoacyl-tRNA + H2O = a tRNA + a D-alpha-amino acid + H(+). Its function is as follows. An aminoacyl-tRNA editing enzyme that deacylates mischarged D-aminoacyl-tRNAs. Also deacylates mischarged glycyl-tRNA(Ala), protecting cells against glycine mischarging by AlaRS. Acts via tRNA-based rather than protein-based catalysis; rejects L-amino acids rather than detecting D-amino acids in the active site. By recycling D-aminoacyl-tRNA to D-amino acids and free tRNA molecules, this enzyme counteracts the toxicity associated with the formation of D-aminoacyl-tRNA entities in vivo and helps enforce protein L-homochirality. This chain is D-aminoacyl-tRNA deacylase, found in Thermus aquaticus.